Reading from the N-terminus, the 509-residue chain is Proline-rich receptor-like protein kinase PERK15 (509 aa).

The interval 1 to 44 is disordered; the sequence is MSTDTIPSLSSPPAPEFPSTTPDTATSPAPSQPSIIGPSSLAPF. Topologically, residues 1-61 are extracellular; sequence MSTDTIPSLS…DGGSRNVALT (61 aa). Low complexity predominate over residues 18-34; it reads PSTTPDTATSPAPSQPS. Residues 62-82 form a helical membrane-spanning segment; the sequence is GLITGVVLGATFVLLGVCIFV. At 83-509 the chain is on the cytoplasmic side; it reads CFYKRKKRKL…IEPEKNTKDT (427 aa). Thr-132 carries the phosphothreonine modification. The Protein kinase domain maps to 143-423; it reads FSNTNLLGQG…VRAFEGNISI (281 aa). Residues 149–157 and Lys-171 each bind ATP; that span reads LGQGGFGYV. A Phosphotyrosine modification is found at Tyr-216. Asp-267 acts as the Proton acceptor in catalysis. Ser-300 is modified (phosphoserine). Phosphothreonine occurs at positions 301 and 306. At Tyr-314 the chain carries Phosphotyrosine. Polar residues predominate over residues 468-499; the sequence is FGSSECSGLTSDNGQNPSGSSSITEGQRTTQE. The segment at 468 to 509 is disordered; the sequence is FGSSECSGLTSDNGQNPSGSSSITEGQRTTQEIEPEKNTKDT.

This sequence belongs to the protein kinase superfamily. Ser/Thr protein kinase family. Mostly expressed in inflorescence bolts, and, to a lower extent, in flower buds and siliques.

The protein resides in the cell membrane. It catalyses the reaction L-seryl-[protein] + ATP = O-phospho-L-seryl-[protein] + ADP + H(+). It carries out the reaction L-threonyl-[protein] + ATP = O-phospho-L-threonyl-[protein] + ADP + H(+). The chain is Proline-rich receptor-like protein kinase PERK15 (PERK15) from Arabidopsis thaliana (Mouse-ear cress).